The sequence spans 143 residues: Calcitonin (143 aa).

An N-terminal signal peptide occupies residues 1-25 (MGFGKSSPFLAFSILVLCQAGSLQA). Positions 26–84 (TPLRSALETLPDPGALSEKEGRLLLAALVKAYVQRKTNELEQEEEQEETEDSSLDSSRA) are excised as a propeptide. Ser-42 bears the Phosphoserine mark. The tract at residues 62–86 (TNELEQEEEQEETEDSSLDSSRAKR) is disordered. The span at 65-78 (LEQEEEQEETEDSS) shows a compositional bias: acidic residues. Residues Cys-87 and Cys-93 are joined by a disulfide bond. The segment at 112–143 (GFGPETPGKKRDIANSLEKDLSSHFGVPTDAN) is disordered. Pro-118 carries the post-translational modification Proline amide. Residues 118-133 (PGKKRDIANSLEKDLS) show a composition bias toward basic and acidic residues. Residues 122–143 (RDIANSLEKDLSSHFGVPTDAN) constitute a propeptide that is removed on maturation.

Belongs to the calcitonin family.

The protein localises to the secreted. Calcitonin is a peptide hormone that causes a rapid but short-lived drop in the level of calcium and phosphate in blood by promoting the incorporation of those ions in the bones. Calcitonin function is mediated by the calcitonin receptor/CALCR and the CALCR-RAMP2 (AMYR2) receptor complex. This Ovis aries (Sheep) protein is Calcitonin (CALCA).